The following is a 541-amino-acid chain: Putative acyl-CoA dehydrogenase AidB (541 aa).

FAD-binding positions include M182–S191, T185, S191, F216–S218, S218, I423–L433, and N429. The segment at V445–V541 is dsDNA-binding.

Belongs to the acyl-CoA dehydrogenase family. As to quaternary structure, homotetramer. Dimer of dimers. It depends on FAD as a cofactor.

Its subcellular location is the cytoplasm. Its function is as follows. Part of the adaptive DNA-repair response to alkylating agents. Could prevent alkylation damage by protecting DNA and destroying alkylating agents that have yet to reach their DNA target. Binds to double-stranded DNA with a preference for a DNA region that includes its own promoter. Shows weak isovaleryl-CoA dehydrogenase activity in vitro. The sequence is that of Putative acyl-CoA dehydrogenase AidB (aidB) from Escherichia coli (strain K12).